The sequence spans 57 residues: Potassium channel toxin gamma-KTx 2.1 (57 aa).

A signal peptide spans 1–21; that stretch reads MKISFVLLLTLFICSIGWSEA. 3 disulfides stabilise this stretch: Cys-28–Cys-49, Cys-34–Cys-54, and Cys-38–Cys-56.

Belongs to the short scorpion toxin superfamily. Potassium channel inhibitor family. Gamma-KTx 2 subfamily. Expressed by the venom gland.

The protein resides in the secreted. Blocks human and/or rat Kv11.1/KCNH2/ERG1, Kv11.2/KCNH6/ERG2 and Kv11.3/KCNH7/ERG3 by binding to channel outer vestibule (S5P domain) with a 1:1 stoichiometry. Inhibition data are the following: hERG1 (reversible, Kd=7.7 nM, IC(50)=3.3 nM, IC(50)=11.9 nM), rERG1 (reversible, Kd=19 nM), hERG2 (reversible, Kd=77 nM), rERG2 (irreversible, Kd=4.2 nM), hERG3 (reversible, Kd=11.5 nM) and rERG3 (reversible, Kd=747 nM) potassium channels. Also has a minimal effect on rat ELK1/KCNH4 potassium channels (9% inhibition at 100 nM). Both this toxin and CnErgTx1 (AC Q86QT3) share mechanism of action and have overlapping binding sites on ERG1. The potency of these two toxins is not affected by elevating potassium ion concentration from 2 to 98 mM. In addition, at high toxin concentrations, block of ERG1 macroscopic currents by these two toxins is incomplete (88%). The blockade by this toxin is preferentially closed channel state-dependent, with a component of open, but not inactive state-dependent blockade. This toxin produces a concentration-dependent prolongation of QTc in the isolated rabbit heart (16.3% at 100 nM). The polypeptide is Potassium channel toxin gamma-KTx 2.1 (Mesobuthus eupeus (Lesser Asian scorpion)).